Here is a 573-residue protein sequence, read N- to C-terminus: Solute carrier family 41 member 2 (573 aa).

Over 1–162 (MTNSKGRSIT…KESSGIMALQ (162 aa)) the chain is Extracellular. Residues serine 136 and serine 137 each carry the phosphoserine modification. A helical membrane pass occupies residues 163 to 183 (ILVPFLLAGFGTVSAGMVLDI). Over 184–195 (VQHWEVFRKVTE) the chain is Cytoplasmic. Residues 196-216 (VFILVPALLGLKGNLEMTLAS) traverse the membrane as a helical segment. At 217–245 (RLSTAVNIGKMDSPIEKWNLIIGNLALKQ) the chain is on the extracellular side. The helical transmembrane segment at 246–266 (VQATVVGFLAAVAAIILGWIP) threads the bilayer. Residues 267 to 282 (EGKYYLDHSILLCSSS) are Cytoplasmic-facing. Residues 283-303 (VATAFIASLLQGIIMVGVIVG) form a helical membrane-spanning segment. The Extracellular segment spans residues 304 to 313 (SKKTGINPDN). A helical membrane pass occupies residues 314–334 (VATPIAASFGDLITLAILAWI). Topologically, residues 335 to 347 (SQGLYSCLETYYY) are cytoplasmic. A helical membrane pass occupies residues 348 to 368 (ISPLVGVFFLALTPIWIIIAA). Over 369–376 (KHPATRTV) the chain is Extracellular. Residues 377–397 (LHSGWEPVITAMVISSIGGLI) traverse the membrane as a helical segment. The Cytoplasmic portion of the chain corresponds to 398 to 406 (LDTTVSDPN). The helical transmembrane segment at 407–427 (LVGIVVYTPVINGIGGNLVAI) threads the bilayer. Topologically, residues 428-469 (QASRISTYLHLHSIPGELPDEPKGCYYPFRTFFGPGVNNKSA) are extracellular. The chain crosses the membrane as a helical span at residues 470 to 490 (QVLLLLVIPGHLIFLYTIHLM). The Cytoplasmic portion of the chain corresponds to 491–498 (KSGHTSLT). Residues 499 to 519 (IIFIVVYLFGAVLQVFTLLWI) form a helical membrane-spanning segment. Residues 520 to 543 (ADWMVHHFWRKGKDPDSFSIPYLT) lie on the Extracellular side of the membrane. The chain crosses the membrane as a helical span at residues 544 to 564 (ALGDLLGTALLALSFHFLWLI). Over 565-573 (GDRDGDVGD) the chain is Cytoplasmic.

It belongs to the SLC41A transporter family.

The protein localises to the cell membrane. The enzyme catalyses Mg(2+)(in) = Mg(2+)(out). It carries out the reaction Mn(2+)(in) = Mn(2+)(out). The catalysed reaction is Co(2+)(in) = Co(2+)(out). It catalyses the reaction Ni(2+)(in) = Ni(2+)(out). The enzyme catalyses Fe(2+)(in) = Fe(2+)(out). Its function is as follows. Acts as a plasma-membrane magnesium transporter. Can also mediate the transport of other divalent metal cations in an order of Ba(2+) &gt; Ni(2+) &gt; Co(2+) &gt; Fe(2+) &gt; Mn(2+). The polypeptide is Solute carrier family 41 member 2 (SLC41A2) (Homo sapiens (Human)).